A 438-amino-acid chain; its full sequence is MRISIFGLGYVGAVCAGCLTARGHEVIGVDVSSTKIDLINQGKSPIVEPGLEALLQQGIANGRLRGTTDFAEAIRASDVSMICVGTPSKKNGDLGLEYIESVCREIGYVLRDTTRRHTIVVRSTVLPGTVKNVVIPILEDCSGKKAGVDFGVAVNPEFLRESTAIKDYDQPPMTVIGELDSASGDILQALYEELDAPIIRKPIEVAEMIKYTCNVWHATKVTFANEIGNIAKAVGVDGREVMDVVCQDKVLNLSQYYMRPGFAFGGSCLPKDVRALTYRAASLDVRAPLLDSLMRSNESQVQNAFELIEAHDKRKVALLGLSFKAGTDDLRESPLVELAERLIGKGYQLDIYDENVQYARVHGANKDYIESKIPHVSSLLNANLQQVIDNADIIVLGNRDEQFRALALQAPAGKQVIDLVGFMNKPTSTTARTEGICW.

Tyr-10, Val-11, Asp-30, Lys-35, Thr-86, and Thr-124 together coordinate NAD(+). Glu-161, Lys-210, Asn-214, His-217, Asn-225, Tyr-256, Tyr-257, Arg-259, Phe-262, and Gly-265 together coordinate GDP-alpha-D-mannuronate. Cys-268 is an active-site residue. Lys-271 is an NAD(+) binding site. Position 324 (Lys-324) interacts with GDP-alpha-D-mannuronate. Arg-331 is a binding site for NAD(+).

Belongs to the UDP-glucose/GDP-mannose dehydrogenase family.

The enzyme catalyses GDP-alpha-D-mannose + 2 NAD(+) + H2O = GDP-alpha-D-mannuronate + 2 NADH + 3 H(+). Its pathway is glycan biosynthesis; alginate biosynthesis. Functionally, catalyzes the oxidation of guanosine diphospho-D-mannose (GDP-D-mannose) to GDP-D-mannuronic acid, a precursor for alginate polymerization. The alginate layer causes a mucoid phenotype and provides a protective barrier against host immune defenses and antibiotics. The chain is GDP-mannose 6-dehydrogenase (algD) from Pseudomonas putida (strain ATCC 47054 / DSM 6125 / CFBP 8728 / NCIMB 11950 / KT2440).